The following is a 366-amino-acid chain: Holliday junction branch migration complex subunit RuvB (366 aa).

A disordered region spans residues M1 to D48. The large ATPase domain (RuvB-L) stretch occupies residues G21–Y212. ATP is bound by residues L51, R52, G93, K96, T97, T98, E159–F161, R202, Y212, and R249. Position 97 (T97) interacts with Mg(2+). The segment at T213 to G283 is small ATPAse domain (RuvB-S). The segment at H286–S366 is head domain (RuvB-H). DNA is bound by residues R341, R343, and R346.

The protein belongs to the RuvB family. Homohexamer. Forms an RuvA(8)-RuvB(12)-Holliday junction (HJ) complex. HJ DNA is sandwiched between 2 RuvA tetramers; dsDNA enters through RuvA and exits via RuvB. An RuvB hexamer assembles on each DNA strand where it exits the tetramer. Each RuvB hexamer is contacted by two RuvA subunits (via domain III) on 2 adjacent RuvB subunits; this complex drives branch migration. In the full resolvosome a probable DNA-RuvA(4)-RuvB(12)-RuvC(2) complex forms which resolves the HJ.

It is found in the cytoplasm. The enzyme catalyses ATP + H2O = ADP + phosphate + H(+). Functionally, the RuvA-RuvB-RuvC complex processes Holliday junction (HJ) DNA during genetic recombination and DNA repair, while the RuvA-RuvB complex plays an important role in the rescue of blocked DNA replication forks via replication fork reversal (RFR). RuvA specifically binds to HJ cruciform DNA, conferring on it an open structure. The RuvB hexamer acts as an ATP-dependent pump, pulling dsDNA into and through the RuvAB complex. RuvB forms 2 homohexamers on either side of HJ DNA bound by 1 or 2 RuvA tetramers; 4 subunits per hexamer contact DNA at a time. Coordinated motions by a converter formed by DNA-disengaged RuvB subunits stimulates ATP hydrolysis and nucleotide exchange. Immobilization of the converter enables RuvB to convert the ATP-contained energy into a lever motion, pulling 2 nucleotides of DNA out of the RuvA tetramer per ATP hydrolyzed, thus driving DNA branch migration. The RuvB motors rotate together with the DNA substrate, which together with the progressing nucleotide cycle form the mechanistic basis for DNA recombination by continuous HJ branch migration. Branch migration allows RuvC to scan DNA until it finds its consensus sequence, where it cleaves and resolves cruciform DNA. In Rhodopirellula baltica (strain DSM 10527 / NCIMB 13988 / SH1), this protein is Holliday junction branch migration complex subunit RuvB.